A 438-amino-acid chain; its full sequence is Succinyl-CoA:glutarate CoA-transferase (438 aa).

Residues 1-31 (MLATLARVAALRRTCLFSGRGGGRGLWTGRP) constitute a mitochondrion transit peptide. The active-site Nucleophile is the Asp-205. Residue Lys-394 is modified to N6-acetyllysine.

Belongs to the CoA-transferase III family. As to expression, highly expressed in kidney. Intermediate expression in liver, skeletal muscle and pancreas. Little to no expression detected in other tissues examined.

It is found in the mitochondrion. The enzyme catalyses glutarate + succinyl-CoA = glutaryl-CoA + succinate. It catalyses the reaction 3-hydroxy-3-methylglutarate + succinyl-CoA = (3S)-3-hydroxy-3-methylglutaryl-CoA + succinate. It carries out the reaction 3-hydroxy-3-methylglutarate + glutaryl-CoA = (3S)-3-hydroxy-3-methylglutaryl-CoA + glutarate. The catalysed reaction is hexanedioate + glutaryl-CoA = hexanedioyl-CoA + glutarate. The enzyme catalyses itaconate + glutaryl-CoA = itaconyl-CoA + glutarate. It catalyses the reaction itaconate + succinyl-CoA = itaconyl-CoA + succinate. Inhibited by valsartan and losartan carboxylate. Functionally, coenzyme A (CoA) transferase that reversibly catalyzes the transfer of a CoA moiety from a dicarboxyl-CoA to a dicarboxylate in a metabolite recycling process. Displays preference for succinyl-CoA and glutarate-CoA as dicarboxyl-CoA donors and glutarate, succinate, adipate/hexanedioate, itaconate and 3-hydroxy-3-methylglutarate as dicarboxylate acceptors. Acts on intermediates or end products of lysine and tryptophan degradation pathway, in particular catalyzes succinyl-CoA-dependent reesterification of free glutarate into glutaryl-CoA to prevent renal excretion of glutarate. Upon inflammation, may convert macrophage-derived itaconate to itaconyl-CoA in erythroid precursors where it negatively regulates the TCA cycle and heme synthesis to limit erythroid differentiation in the context of stress erythropoiesis. This Homo sapiens (Human) protein is Succinyl-CoA:glutarate CoA-transferase.